Here is a 126-residue protein sequence, read N- to C-terminus: Holo-[acyl-carrier-protein] synthase (126 aa).

Aspartate 9 and glutamate 58 together coordinate Mg(2+).

The protein belongs to the P-Pant transferase superfamily. AcpS family. The cofactor is Mg(2+).

Its subcellular location is the cytoplasm. It catalyses the reaction apo-[ACP] + CoA = holo-[ACP] + adenosine 3',5'-bisphosphate + H(+). In terms of biological role, transfers the 4'-phosphopantetheine moiety from coenzyme A to a Ser of acyl-carrier-protein. This is Holo-[acyl-carrier-protein] synthase from Hamiltonella defensa subsp. Acyrthosiphon pisum (strain 5AT).